The sequence spans 287 residues: Prepilin leader peptidase/N-methyltransferase (287 aa).

6 helical membrane-spanning segments follow: residues 10-30 (LGFPAAAGLGLLIGSFLNVVI), 101-121 (ISIQYPLVELLTSILCVASVW), 125-145 (FGWQGFGAIVLSCFLVAMSGI), 177-197 (KPALLGAAVGYVSLWTVWWLF), 226-246 (ILPIILISSLVGAVLGSIWLF), and 253-273 (ATPIPFGPYLAIAGWVVFFWG).

It belongs to the peptidase A24 family.

It localises to the cell inner membrane. The enzyme catalyses Typically cleaves a -Gly-|-Phe- bond to release an N-terminal, basic peptide of 5-8 residues from type IV prepilin, and then N-methylates the new N-terminal amino group, the methyl donor being S-adenosyl-L-methionine.. Plays an essential role in type IV pili and type II pseudopili formation by proteolytically removing the leader sequence from substrate proteins and subsequently monomethylating the alpha-amino group of the newly exposed N-terminal phenylalanine. In Xanthomonas campestris pv. campestris (strain ATCC 33913 / DSM 3586 / NCPPB 528 / LMG 568 / P 25), this protein is Prepilin leader peptidase/N-methyltransferase (xpsO).